We begin with the raw amino-acid sequence, 258 residues long: Putative cysteine-rich repeat secretory protein 61 (258 aa).

The N-terminal stretch at 1-31 (MSSSFIPKRIALVLNLAMVAIQVFFIRSVSS) is a signal peptide. Gnk2-homologous domains lie at 38–140 (YLYH…PTAF) and 146–253 (DKNK…IYPF).

Belongs to the cysteine-rich repeat secretory protein family.

Its subcellular location is the secreted. This Arabidopsis thaliana (Mouse-ear cress) protein is Putative cysteine-rich repeat secretory protein 61 (CRRSP61).